Reading from the N-terminus, the 853-residue chain is Cytochrome P450 monooxygenase mpaDE' (853 aa).

The Lumenal segment spans residues 1–6 (MESLSL). A helical transmembrane segment spans residues 7–29 (TWITAIAVVLYLVQRYVRSYWRL). The Cytoplasmic segment spans residues 30–853 (KDIPGPVLAK…DIENAIEGQK (824 aa)). C449 is a heme binding site.

It belongs to the cytochrome P450 family. Heme is required as a cofactor.

The protein localises to the endoplasmic reticulum membrane. It catalyses the reaction 5-methylorsellinate + reduced [NADPH--hemoprotein reductase] + O2 = 4,6-dihydroxy-2-(hydroxymethyl)-3-methylbenzoate + oxidized [NADPH--hemoprotein reductase] + H2O + H(+). It carries out the reaction 4,6-dihydroxy-2-(hydroxymethyl)-3-methylbenzoate + H(+) = 5,7-dihydroxy-4-methylphthalide + H2O. It functions in the pathway secondary metabolite biosynthesis; terpenoid biosynthesis. In terms of biological role, cytochrome P450 monooxygenase; part of the gene cluster that mediates the biosynthesis of mycophenolic acid (MPA), the first isolated antibiotic natural product in the world obtained from a culture of Penicillium brevicompactum in 1893. MpaDE' is an endoplasmic reticulum-bound enzyme that catalyzes the conversion of 5-methylorsellinic acid (5MOA) into the phthalide compound 5,7-dihydroxy-4,6-dimethylphthalide (DHMP). MpaDE' first catalyzes hydroxylation of 5-MOA to 4,6-dihydroxy-2-(hydroxymethyl)-3-methylbenzoic acid (DHMB), and then acts as a lactone synthase that catalyzes the ring closure to convert DHMB into DHMP. The first step of the pathway is the synthesis of 5-methylorsellinic acid (5MOA) by the cytosolic polyketide synthase mpaC. 5MOA is then converted to the phthalide compound 5,7-dihydroxy-4,6-dimethylphthalide (DHMP) by the endoplasmic reticulum-bound cytochrome P450 monooxygenase mpaDE. MpaDE first catalyzes hydroxylation of 5-MOA to 4,6-dihydroxy-2-(hydroxymethyl)-3-methylbenzoic acid (DHMB). MpaDE then acts as a lactone synthase that catalyzes the ring closure to convert DHMB into DHMP. The next step is the prenylation of DHMP by the Golgi apparatus-associated prenyltransferase mpaA to yield farnesyl-DHMP (FDHMP). The ER-bound oxygenase mpaB then mediates the oxidative cleavage the C19-C20 double bond in FDHMP to yield FDHMP-3C via a mycophenolic aldehyde intermediate. The O-methyltransferase mpaG catalyzes the methylation of FDHMP-3C to yield MFDHMP-3C. After the cytosolic methylation of FDHMP-3C, MFDHMP-3C enters into peroxisomes probably via free diffusion due to its low molecular weight. Upon a peroxisomal CoA ligation reaction, catalyzed by a beta-oxidation component enzyme acyl-CoA ligase ACL891, MFDHMP-3C-CoA would then be restricted to peroxisomes for the following beta-oxidation pathway steps. The peroxisomal beta-oxidation machinery than converts MFDHMP-3C-CoA into MPA_CoA, via a beta-oxidation chain-shortening process. Finally mpaH acts as a peroxisomal acyl-CoA hydrolase with high substrate specificity toward MPA-CoA to release the final product MPA. In Penicillium brevicompactum, this protein is Cytochrome P450 monooxygenase mpaDE'.